Here is a 328-residue protein sequence, read N- to C-terminus: tRNA N6-adenosine threonylcarbamoyltransferase (328 aa).

His-111 and His-115 together coordinate Fe cation. Residues 133-137 (LVSGG), Asp-166, Gly-179, Asp-183, and Asn-270 contribute to the substrate site. Asp-296 contacts Fe cation.

The protein belongs to the KAE1 / TsaD family. It depends on Fe(2+) as a cofactor.

Its subcellular location is the cytoplasm. The catalysed reaction is L-threonylcarbamoyladenylate + adenosine(37) in tRNA = N(6)-L-threonylcarbamoyladenosine(37) in tRNA + AMP + H(+). Functionally, required for the formation of a threonylcarbamoyl group on adenosine at position 37 (t(6)A37) in tRNAs that read codons beginning with adenine. Is involved in the transfer of the threonylcarbamoyl moiety of threonylcarbamoyl-AMP (TC-AMP) to the N6 group of A37, together with TsaE and TsaB. TsaD likely plays a direct catalytic role in this reaction. The protein is tRNA N6-adenosine threonylcarbamoyltransferase of Phytoplasma australiense.